We begin with the raw amino-acid sequence, 320 residues long: ATP-dependent 6-phosphofructokinase (320 aa).

ATP is bound at residue G12. 22–26 (RGVVR) is an ADP binding site. ATP contacts are provided by residues 73 to 74 (RF) and 103 to 106 (GDGS). D104 contributes to the Mg(2+) binding site. 126 to 128 (TID) is a substrate binding site. Residue D128 is the Proton acceptor of the active site. R155 lines the ADP pocket. Residues R163 and 170–172 (MGR) each bind substrate. ADP is bound by residues 186 to 188 (GCE), K212, and 214 to 216 (KKH). Residues E223, R244, and 250–253 (HIQR) contribute to the substrate site.

This sequence belongs to the phosphofructokinase type A (PFKA) family. ATP-dependent PFK group I subfamily. Prokaryotic clade 'B1' sub-subfamily. Homotetramer. Mg(2+) serves as cofactor.

Its subcellular location is the cytoplasm. It carries out the reaction beta-D-fructose 6-phosphate + ATP = beta-D-fructose 1,6-bisphosphate + ADP + H(+). It participates in carbohydrate degradation; glycolysis; D-glyceraldehyde 3-phosphate and glycerone phosphate from D-glucose: step 3/4. Its activity is regulated as follows. Allosterically activated by ADP and other diphosphonucleosides, and allosterically inhibited by phosphoenolpyruvate. In terms of biological role, catalyzes the phosphorylation of D-fructose 6-phosphate to fructose 1,6-bisphosphate by ATP, the first committing step of glycolysis. This Vibrio parahaemolyticus serotype O3:K6 (strain RIMD 2210633) protein is ATP-dependent 6-phosphofructokinase.